The chain runs to 361 residues: tRNA/tmRNA (uracil-C(5))-methyltransferase (361 aa).

S-adenosyl-L-methionine-binding residues include glutamine 183, tyrosine 211, asparagine 216, glutamate 232, and aspartate 294. Cysteine 319 acts as the Nucleophile in catalysis. Residue glutamate 353 is the Proton acceptor of the active site.

The protein belongs to the class I-like SAM-binding methyltransferase superfamily. RNA M5U methyltransferase family. TrmA subfamily.

It catalyses the reaction uridine(54) in tRNA + S-adenosyl-L-methionine = 5-methyluridine(54) in tRNA + S-adenosyl-L-homocysteine + H(+). It carries out the reaction uridine(341) in tmRNA + S-adenosyl-L-methionine = 5-methyluridine(341) in tmRNA + S-adenosyl-L-homocysteine + H(+). In terms of biological role, dual-specificity methyltransferase that catalyzes the formation of 5-methyluridine at position 54 (m5U54) in all tRNAs, and that of position 341 (m5U341) in tmRNA (transfer-mRNA). The protein is tRNA/tmRNA (uracil-C(5))-methyltransferase of Acinetobacter baumannii (strain AB307-0294).